The primary structure comprises 206 residues: CASP-like protein 2C1 (206 aa).

Residues 1-31 (MSVLGVGPRTVTPHLRKGMMESSSGISLARA) lie on the Cytoplasmic side of the membrane. The helical transmembrane segment at 32 to 52 (EAFLRLFAILVLVLTACLLGF) threads the bilayer. Topologically, residues 53 to 71 (DTQTKLLFSTIKKTATFRD) are extracellular. The helical transmembrane segment at 72-92 (LGALQVVVYVDSVAAGYNLLQ) threads the bilayer. The Cytoplasmic portion of the chain corresponds to 93-111 (LGRGFISAKLKGKLINVSY). A helical transmembrane segment spans residues 112–132 (VTLPWVCFLLDQAAVYTVFSA). Over 133–161 (NTAALQASIIAVTGESSLQWMKVCNRYTR) the chain is Extracellular. A helical membrane pass occupies residues 162 to 182 (FCIQVGGALLSGYLASLLMVL). Residues 183 to 206 (LSSLSAFSLFRLYSPKQFHLLKPT) lie on the Cytoplasmic side of the membrane.

Belongs to the Casparian strip membrane proteins (CASP) family. Homodimer and heterodimers.

The protein localises to the cell membrane. In Vitis vinifera (Grape), this protein is CASP-like protein 2C1.